Here is a 99-residue protein sequence, read N- to C-terminus: Protein AC150 (99 aa).

Residues 38–96 (GFSCYNKPIGVNFPHPTRCDAFYMCVGLNQKLELICPEGFEFDPDVKNCVPISDYGCTA) form the Chitin-binding type-2 domain. Cys73 and Cys86 are joined by a disulfide.

The protein localises to the host nucleus. It localises to the virion. Functionally, plays a role in primary oral infection of the host. The protein is Protein AC150 of Autographa californica nuclear polyhedrosis virus (AcMNPV).